The chain runs to 809 residues: ATP-dependent zinc metalloprotease FTSH 3, mitochondrial (809 aa).

The N-terminal 83 residues, 1 to 83 (MTMIFFSKLN…FANPRLRRFF (83 aa)), are a transit peptide targeting the mitochondrion. A compositionally biased stretch (basic and acidic residues) spans 93-121 (YENYFPKDKQEPKSDQKSEHKEGSEKNEN). Positions 93-122 (YENYFPKDKQEPKSDQKSEHKEGSEKNENE) are disordered. The helical transmembrane segment at 132–152 (FQNLLIPLLALAVFFSTFSFG) threads the bilayer. 362–369 (GPPGTGKT) contributes to the ATP binding site. Residue histidine 586 participates in Zn(2+) binding. Glutamate 587 is a catalytic residue. Zn(2+) is bound by residues histidine 590 and aspartate 662. The tract at residues 776-809 (GFEETEKDSAATPTVEPVVDDGAPPPFEPQVVPT) is disordered.

The protein in the N-terminal section; belongs to the AAA ATPase family. It in the C-terminal section; belongs to the peptidase M41 family. It depends on Zn(2+) as a cofactor.

It is found in the mitochondrion inner membrane. Its function is as follows. Probable ATP-dependent zinc metallopeptidase. Involved in the assembly and/or stability of the complexes I and V of the mitochondrial oxidative phosphorylation system. The sequence is that of ATP-dependent zinc metalloprotease FTSH 3, mitochondrial (FTSH3) from Arabidopsis thaliana (Mouse-ear cress).